We begin with the raw amino-acid sequence, 522 residues long: MKPFNELVGKLSDAASRQALKSMHRGIEREALRIEKSGHLALDKHPKALGSALMHSRITTDYSESLLEFITPVFEDIDELVEDLTLTHAYSVRHLNGQRLWPVSMPCYLGDAGDIPIADYGSSNTGQMKRLYRKGLTYRYGAQMQIISGVHFNFSVSDQLWNRLYELSDTSLSLEEFISESYFGLIRNYRRLVWVLPYLFGASPALCSTFIQDPKTNEFPFEVIGNGTLYLPYATSLRMSDLGYTNQEQDNLNISYNSLACYLEGMKSAINMPSAKFAKIGVKVDGEYRQLNANILQIENEFYSPIRAKRVAKGNEKPSESLARAGVEYIEVRALDVNPYSAVGIEKSQIRFLDLFLLNCLLQPSPASDASEEAEIAANLQAVVLEGRKPGLKLTRAGEEVSLSGWLESLFGNLNDIAKLLDDEGQDDYQVALAKWQKAVNDPDATLSGQIIKGLKDNQIDHGDWVLQLAEQYHQELKGYPLSEAVTMRYEQDAQASLEKQARLEAEPSVSFDDFLADYFKA.

The protein belongs to the glutamate--cysteine ligase type 1 family. Type 1 subfamily.

The enzyme catalyses L-cysteine + L-glutamate + ATP = gamma-L-glutamyl-L-cysteine + ADP + phosphate + H(+). It participates in sulfur metabolism; glutathione biosynthesis; glutathione from L-cysteine and L-glutamate: step 1/2. In Shewanella halifaxensis (strain HAW-EB4), this protein is Glutamate--cysteine ligase.